Reading from the N-terminus, the 477-residue chain is C3a anaphylatoxin chemotactic receptor (477 aa).

Over M1–D23 the chain is Extracellular. An N-linked (GlcNAc...) asparagine glycan is attached at N9. Residues I24–W46 form a helical membrane-spanning segment. At V47 to N57 the chain is on the cytoplasmic side. A helical membrane pass occupies residues T58–A80. Residues H81–K96 are Extracellular-facing. A disulfide bridge links C95 with C172. Residues L97–L118 form a helical membrane-spanning segment. At D119–A139 the chain is on the cytoplasmic side. A helical membrane pass occupies residues F140–Y160. At R161–R333 the chain is on the extracellular side. N168 carries an N-linked (GlcNAc...) asparagine glycan. Residues Y174 and Y184 each carry the sulfotyrosine modification. N-linked (GlcNAc...) asparagine glycosylation is found at N197 and N201. At Y312 the chain carries Sulfotyrosine. A helical membrane pass occupies residues L334–V353. The Cytoplasmic segment spans residues F354–R370. The helical transmembrane segment at V371–L393 threads the bilayer. At L394–D410 the chain is on the extracellular side. Residues H411–L431 traverse the membrane as a helical segment. Topologically, residues G432–V477 are cytoplasmic. Residue S452 is modified to Phosphoserine. T456 is subject to Phosphothreonine.

It belongs to the G-protein coupled receptor 1 family. As to quaternary structure, interacts with VGF-derived peptide TLQP-21. Detected in varying levels in all tissues examined except the spleen. Especially abundant in heart and lung.

The protein localises to the cell membrane. Functionally, receptor for the chemotactic and inflammatory peptide anaphylatoxin C3a. This receptor stimulates chemotaxis, granule enzyme release and superoxide anion production. The chain is C3a anaphylatoxin chemotactic receptor (C3ar1) from Mus musculus (Mouse).